The following is a 601-amino-acid chain: MEGADLLTAGVLFLFAAVAAVPLAARLGIGAVLGYLLAGIAIGPWGLGFISDVDEILHFSELGVVFLMFIIGLELNPSRLWQLRRSIFGVGAAQVLLSAAVLAGLLMLADFLWQAAVVGGIGLAMSSTAMALQLMREKGMNRSESGQLGFSVLLFQDLAVIPALALVPLLAGSADEHFDWFKVAMKVLAFAVMLIGGRYLLRPVFRFIAASGVREVFTAATLLLVLSAALFMDALGLSMALGTFIAGVLLAESEYRHELENAIDPFKGLLLGLFFISVGMSLNLGVLYTHLLWVAASVVILVVIKMLTLYLLARLYGIRSSERMQFASVLSQGGEFAFVLFSTASSQRLFQGDQMALLLVTVTLSMMTTPLLMKGIDKWLSHRLNGPEENDEKPWVEDDKPQVIVVGFGRFGQVIARLLMANKMRITVLERDIGAVNLMRKYGYKVYYGDATQVELLRSAGAEAAESIVITCNEPEDTMKLVALCQQHFPHLHILARARGRVEAHELLQAGVTQFSRETFSSALELGRKTLVSLGMHPHQAQRAQLHFRRLDMRILRELIPEHSDMVQISRAREARRELEEIFQREMQQERRQLDGWDEFE.

13 helical membrane passes run 4 to 24 (ADLLTAGVLFLFAAVAAVPLA), 29 to 49 (IGAVLGYLLAGIAIGPWGLGF), 55 to 75 (EILHFSELGVVFLMFIIGLEL), 87 to 107 (IFGVGAAQVLLSAAVLAGLLM), 111 to 131 (FLWQAAVVGGIGLAMSSTAMA), 152 to 172 (VLLFQDLAVIPALALVPLLAG), 177 to 197 (HFDWFKVAMKVLAFAVMLIGG), 207 to 227 (FIAASGVREVFTAATLLLVLS), 230 to 250 (LFMDALGLSMALGTFIAGVLL), 262 to 282 (AIDPFKGLLLGLFFISVGMSL), 284 to 304 (LGVLYTHLLWVAASVVILVVI), 324 to 344 (MQFASVLSQGGEFAFVLFSTA), and 356 to 376 (ALLLVTVTLSMMTTPLLMKGI). Residues 400-519 (KPQVIVVGFG…AGVTQFSRET (120 aa)) enclose the RCK N-terminal domain.

The protein belongs to the monovalent cation:proton antiporter 2 (CPA2) transporter (TC 2.A.37) family. KefB subfamily. Interacts with the regulatory subunit KefG.

It is found in the cell inner membrane. In terms of biological role, pore-forming subunit of a potassium efflux system that confers protection against electrophiles. Catalyzes K(+)/H(+) antiport. The chain is Glutathione-regulated potassium-efflux system protein KefB from Salmonella paratyphi C (strain RKS4594).